Here is a 310-residue protein sequence, read N- to C-terminus: MSNYLSSFLLASSLITGTLWIINKILSHNLLDSKIPFNIKKSKIYYKSKQVVQTFASFFPILIIVFIIRTFICEPFQIPSESMMPTLLPGDFILVKKFSYGIKNPFSNNVIVFINTPKRGDIVVFKHPNNNAINYVKRIVGLPGDKINYNILTKRLTITPNNINEQHTKNISINYKYIKPNDFTKHFKLNNIILNNVHSLESSNNNLLQLEMYQEKIEKIAYNIFFKKKLIDQKDLYFKQFSQKQGTWIVPKHKYFVLGDNRDNSLDSRYWGFVPEKNLIGKVVFIWMHLIKKEGQWPTGIQFDRIGNIY.

Residues 5–25 (LSSFLLASSLITGTLWIINKI) form a helical membrane-spanning segment. At 26 to 57 (LSHNLLDSKIPFNIKKSKIYYKSKQVVQTFAS) the chain is on the cytoplasmic side. Residues 58 to 78 (FFPILIIVFIIRTFICEPFQI) form a helical membrane-spanning segment. The Extracellular portion of the chain corresponds to 79–310 (PSESMMPTLL…IQFDRIGNIY (232 aa)). Residues serine 82 and lysine 137 contribute to the active site.

Belongs to the peptidase S26 family.

It is found in the cell membrane. It catalyses the reaction Cleavage of hydrophobic, N-terminal signal or leader sequences from secreted and periplasmic proteins.. The polypeptide is Signal peptidase I (lepB) (Buchnera aphidicola subsp. Baizongia pistaciae (strain Bp)).